The following is a 397-amino-acid chain: DNA-directed RNA polymerase subunit Rpo1C (397 aa).

Belongs to the RNA polymerase beta' chain family. Part of the RNA polymerase complex.

It is found in the cytoplasm. It catalyses the reaction RNA(n) + a ribonucleoside 5'-triphosphate = RNA(n+1) + diphosphate. Functionally, DNA-dependent RNA polymerase (RNAP) catalyzes the transcription of DNA into RNA using the four ribonucleoside triphosphates as substrates. Forms part of the jaw domain. This chain is DNA-directed RNA polymerase subunit Rpo1C, found in Pyrococcus abyssi (strain GE5 / Orsay).